Reading from the N-terminus, the 102-residue chain is Protein RnfH (102 aa).

This sequence belongs to the UPF0125 (RnfH) family.

The protein is Protein RnfH of Haemophilus influenzae (strain 86-028NP).